The sequence spans 225 residues: 7-carboxy-7-deazaguanine synthase (225 aa).

Substrate-binding positions include 14 to 16 (LQG) and R29. One can recognise a Radical SAM core domain in the interval 20–225 (HFGKSAFFIR…LQTHKWLGVL (206 aa)). Residues C33, C37, and C40 each contribute to the [4Fe-4S] cluster site. T42 serves as a coordination point for Mg(2+). Residue T77 coordinates substrate. S-adenosyl-L-methionine contacts are provided by residues G79 and 127–129 (SPK).

It belongs to the radical SAM superfamily. 7-carboxy-7-deazaguanine synthase family. As to quaternary structure, homodimer. The cofactor is [4Fe-4S] cluster. Requires S-adenosyl-L-methionine as cofactor. Mg(2+) is required as a cofactor.

It catalyses the reaction 6-carboxy-5,6,7,8-tetrahydropterin + H(+) = 7-carboxy-7-deazaguanine + NH4(+). It functions in the pathway purine metabolism; 7-cyano-7-deazaguanine biosynthesis. Functionally, catalyzes the complex heterocyclic radical-mediated conversion of 6-carboxy-5,6,7,8-tetrahydropterin (CPH4) to 7-carboxy-7-deazaguanine (CDG), a step common to the biosynthetic pathways of all 7-deazapurine-containing compounds. The chain is 7-carboxy-7-deazaguanine synthase from Prochlorococcus marinus (strain SARG / CCMP1375 / SS120).